We begin with the raw amino-acid sequence, 83 residues long: Large ribosomal subunit protein bL27 (83 aa).

Positions 1 to 25 are disordered; sequence MAHKKGQGASRNGRDSESKRLGLKV.

It belongs to the bacterial ribosomal protein bL27 family.

The chain is Large ribosomal subunit protein bL27 from Chlamydia trachomatis serovar L2 (strain ATCC VR-902B / DSM 19102 / 434/Bu).